The chain runs to 292 residues: Claudin-23 (292 aa).

The Cytoplasmic portion of the chain corresponds to 1 to 3 (MRT). Residues 4–24 (PVVMTLGMVLAPCGLLLNLTG) traverse the membrane as a helical segment. The Extracellular segment spans residues 25–81 (TLAPGWRLVKGFLNQPVDVELYQGLWDMCREQSSRERECGQTDQWGYFEAQPVLVAR). Residues 82–102 (ALMVTSLAATVLGLLLASLGV) form a helical membrane-spanning segment. Over 103–110 (RCWQDEPN) the chain is Cytoplasmic. A helical transmembrane segment spans residues 111–131 (FVLAGLSGVVLFVAGLLGLIP). At 132 to 160 (VSWYNHFLGDRDVLPAPASPVTVQVSYSL) the chain is on the extracellular side. A helical transmembrane segment spans residues 161–181 (VLGYLGSCLLLLGGFSLALSF). At 182–292 (APWCDERCRR…DSSLPCDSDL (111 aa)) the chain is on the cytoplasmic side. Residues 222-292 (KYYSDGQHRP…DSSLPCDSDL (71 aa)) form a disordered region. Residues 273 to 282 (DAPSCSTHPC) show a composition bias toward polar residues.

The protein belongs to the claudin family. Expressed in germinal center B-cells, placenta, stomach as well as in colon tumor.

It localises to the cell junction. Its subcellular location is the tight junction. The protein resides in the cell membrane. Functionally, plays a major role in tight junction-specific obliteration of the intercellular space, through calcium-independent cell-adhesion activity. This chain is Claudin-23 (CLDN23), found in Homo sapiens (Human).